The sequence spans 383 residues: Succinyl-diaminopimelate desuccinylase (383 aa).

His69 serves as a coordination point for Zn(2+). The active site involves Asp71. Asp103 is a Zn(2+) binding site. Glu137 acts as the Proton acceptor in catalysis. Zn(2+) contacts are provided by Glu138, Glu166, and His357.

It belongs to the peptidase M20A family. DapE subfamily. As to quaternary structure, homodimer. Zn(2+) serves as cofactor. The cofactor is Co(2+).

It carries out the reaction N-succinyl-(2S,6S)-2,6-diaminopimelate + H2O = (2S,6S)-2,6-diaminopimelate + succinate. It functions in the pathway amino-acid biosynthesis; L-lysine biosynthesis via DAP pathway; LL-2,6-diaminopimelate from (S)-tetrahydrodipicolinate (succinylase route): step 3/3. Functionally, catalyzes the hydrolysis of N-succinyl-L,L-diaminopimelic acid (SDAP), forming succinate and LL-2,6-diaminopimelate (DAP), an intermediate involved in the bacterial biosynthesis of lysine and meso-diaminopimelic acid, an essential component of bacterial cell walls. The polypeptide is Succinyl-diaminopimelate desuccinylase (Rickettsia typhi (strain ATCC VR-144 / Wilmington)).